The chain runs to 62 residues: DNA-directed RNA polymerase subunit Rpo10 (62 aa).

Zn(2+) contacts are provided by cysteine 6, cysteine 9, cysteine 43, and cysteine 44.

Belongs to the archaeal Rpo10/eukaryotic RPB10 RNA polymerase subunit family. Part of the RNA polymerase complex. The cofactor is Zn(2+).

It is found in the cytoplasm. The enzyme catalyses RNA(n) + a ribonucleoside 5'-triphosphate = RNA(n+1) + diphosphate. In terms of biological role, DNA-dependent RNA polymerase (RNAP) catalyzes the transcription of DNA into RNA using the four ribonucleoside triphosphates as substrates. The protein is DNA-directed RNA polymerase subunit Rpo10 of Methanosarcina mazei (strain ATCC BAA-159 / DSM 3647 / Goe1 / Go1 / JCM 11833 / OCM 88) (Methanosarcina frisia).